We begin with the raw amino-acid sequence, 348 residues long: 2-heptyl-4(1H)-quinolone synthase subunit PqsC (348 aa).

The active-site Acyl-thioester intermediate is Cys-129. The active site involves His-269.

The protein belongs to the thiolase-like superfamily. FabH family. As to quaternary structure, forms a tight complex with PqsB.

It is found in the cytoplasm. The enzyme catalyses (2-aminobenzoyl)acetate + octanoyl-CoA + H(+) = 2-heptyl-4(1H)-quinolone + CO2 + CoA + H2O. With respect to regulation, folding of PqsC and binding of octanoate are promoted by PqsB. Binding of the octanoyl group probably increases the binding affinity of the complex for 2-ABA. Activity of the complex is inhibited by 2-aminoacetophenone (2-AA). Functionally, required for the biosynthesis of the quorum-sensing signaling molecules 2-heptyl-4(1H)-quinolone (HHQ) and 2-heptyl-3-hydroxy-4(1H)-quinolone (Pseudomonas quinolone signal or PQS), which are important for biofilm formation and virulence. The PqsC/PqsB complex catalyzes the condensation of 2-aminobenzoylacetate (2-ABA) and octanoyl-CoA to form HHQ. First, PqsC acquires an octanoyl group from octanoyl-CoA and forms an octanoyl-PqsC intermediate. Then, together with PqsB, it catalyzes the coupling of 2-ABA with the octanoate group, leading to decarboxylation and dehydration, and resulting in closure of the quinoline ring. The polypeptide is 2-heptyl-4(1H)-quinolone synthase subunit PqsC (Pseudomonas aeruginosa (strain ATCC 15692 / DSM 22644 / CIP 104116 / JCM 14847 / LMG 12228 / 1C / PRS 101 / PAO1)).